We begin with the raw amino-acid sequence, 203 residues long: uncharacterized protein (203 aa).

Residues 89–109 (CEIPFAACSVLSWSLPTIAAL) form a helical membrane-spanning segment.

The protein localises to the membrane. This is an uncharacterized protein from Saccharomyces cerevisiae (strain ATCC 204508 / S288c) (Baker's yeast).